We begin with the raw amino-acid sequence, 2298 residues long: Protein Ycf2 (2298 aa).

1652–1659 (GSIGTGRS) contributes to the ATP binding site.

It belongs to the Ycf2 family.

It is found in the plastid. It localises to the chloroplast stroma. Probable ATPase of unknown function. Its presence in a non-photosynthetic plant (Epifagus virginiana) and experiments in tobacco indicate that it has an essential function which is probably not related to photosynthesis. The sequence is that of Protein Ycf2 from Aethionema cordifolium (Lebanon stonecress).